Consider the following 1407-residue polypeptide: JmjC domain-containing histone demethylation protein 1 (1407 aa).

Disordered stretches follow at residues 1–86 and 98–151; these read MISA…SSTI and PTFT…NAFS. Basic and acidic residues-rich tracts occupy residues 55-67 and 125-140; these read DHVRSTPTDKRPS and PVERPAKRPRSERDES. A compositionally biased stretch (polar residues) spans 141–150; the sequence is SYTQHRSNAF. The PHD-type zinc-finger motif lies at 323–382; it reads QASCATCNLVRIPVDNEDQDVTWISCDGCKRWFHIVCAGFKNDRETRTVDKFICKTCRPI. The 159-residue stretch at 577–735 folds into the JmjC domain; that stretch reads VSQSKLGRLI…MQIKIAKIEK (159 aa). Residue threonine 628 coordinates substrate. Residues histidine 631 and aspartate 633 each coordinate Fe cation. A substrate-binding site is contributed by lysine 648. Residue histidine 703 coordinates Fe cation. 4 disordered regions span residues 893 to 987, 1004 to 1027, 1122 to 1183, and 1252 to 1389; these read KLSL…LGPK, KEENNGASGSQMTVSTSSLGHHTP, IKAQ…QDSV, and DEMD…SLRL. 2 stretches are compositionally biased toward basic and acidic residues: residues 896-914 and 928-938; these read LAEKRPAGRPSRRSERNAD and LSERPAVDIQK. Positions 1008-1027 are enriched in polar residues; that stretch reads NGASGSQMTVSTSSLGHHTP. A compositionally biased stretch (basic and acidic residues) spans 1254-1264; the sequence is MDIHDQVDAGG. Over residues 1273–1284 the composition is skewed to low complexity; sequence PSSGSRQSSRQP. Residues 1285 to 1296 are compositionally biased toward basic and acidic residues; it reads RQVERYMPEVHF. Residues 1297 to 1349 show a composition bias toward low complexity; the sequence is AKTAKSTTTTPQTTRRSSFGSSGRKTTPGLSSGSKKSGSRPSSSHGKKSLSPS.

Belongs to the JHDM1 histone demethylase family. Fe(2+) is required as a cofactor.

It is found in the nucleus. It catalyses the reaction N(6),N(6)-dimethyl-L-lysyl(36)-[histone H3] + 2 2-oxoglutarate + 2 O2 = L-lysyl(36)-[histone H3] + 2 formaldehyde + 2 succinate + 2 CO2. Functionally, histone demethylase that specifically demethylates 'Lys-36' of histone H3, thereby playing a central role in histone code. In Emericella nidulans (strain FGSC A4 / ATCC 38163 / CBS 112.46 / NRRL 194 / M139) (Aspergillus nidulans), this protein is JmjC domain-containing histone demethylation protein 1 (jhd1).